Consider the following 82-residue polypeptide: Small ribosomal subunit protein bS16 (82 aa).

The protein belongs to the bacterial ribosomal protein bS16 family.

The polypeptide is Small ribosomal subunit protein bS16 (Shewanella sp. (strain MR-4)).